The chain runs to 367 residues: Alanine racemase (367 aa).

Residue Lys35 is the Proton acceptor; specific for D-alanine of the active site. At Lys35 the chain carries N6-(pyridoxal phosphate)lysine. Position 130 (Arg130) interacts with substrate. Tyr258 (proton acceptor; specific for L-alanine) is an active-site residue. Met306 contacts substrate.

This sequence belongs to the alanine racemase family. Pyridoxal 5'-phosphate is required as a cofactor.

It catalyses the reaction L-alanine = D-alanine. Its pathway is amino-acid biosynthesis; D-alanine biosynthesis; D-alanine from L-alanine: step 1/1. Its function is as follows. Catalyzes the interconversion of L-alanine and D-alanine. May also act on other amino acids. The polypeptide is Alanine racemase (alr) (Acinetobacter baumannii (strain SDF)).